We begin with the raw amino-acid sequence, 98 residues long: NADH-ubiquinone oxidoreductase chain 4L (98 aa).

Transmembrane regions (helical) follow at residues 1–21 (MPVVYVNIFLAFIVSLVGLLI), 29–49 (SLLCLEGMMLSLFVMLTVTVL), and 61–81 (IILLVFAACEAALGLSLLVMV).

The protein belongs to the complex I subunit 4L family. As to quaternary structure, core subunit of respiratory chain NADH dehydrogenase (Complex I) which is composed of 45 different subunits.

It is found in the mitochondrion inner membrane. The enzyme catalyses a ubiquinone + NADH + 5 H(+)(in) = a ubiquinol + NAD(+) + 4 H(+)(out). In terms of biological role, core subunit of the mitochondrial membrane respiratory chain NADH dehydrogenase (Complex I) which catalyzes electron transfer from NADH through the respiratory chain, using ubiquinone as an electron acceptor. Part of the enzyme membrane arm which is embedded in the lipid bilayer and involved in proton translocation. This is NADH-ubiquinone oxidoreductase chain 4L (MT-ND4L) from Ursus maritimus (Polar bear).